The primary structure comprises 440 residues: Xaa-Pro dipeptidase (440 aa).

The Mn(2+) site is built by Asp-241, Asp-252, His-333, Glu-378, and Glu-417.

It belongs to the peptidase M24B family. Bacterial-type prolidase subfamily. Mn(2+) serves as cofactor.

The enzyme catalyses Xaa-L-Pro dipeptide + H2O = an L-alpha-amino acid + L-proline. Functionally, splits dipeptides with a prolyl residue in the C-terminal position. In Glaesserella parasuis serovar 5 (strain SH0165) (Haemophilus parasuis), this protein is Xaa-Pro dipeptidase.